Here is a 379-residue protein sequence, read N- to C-terminus: DNA-directed RNA polymerase subunit Rpo1C (379 aa).

It belongs to the RNA polymerase beta' chain family. In terms of assembly, part of the RNA polymerase complex.

The protein localises to the cytoplasm. The enzyme catalyses RNA(n) + a ribonucleoside 5'-triphosphate = RNA(n+1) + diphosphate. In terms of biological role, DNA-dependent RNA polymerase (RNAP) catalyzes the transcription of DNA into RNA using the four ribonucleoside triphosphates as substrates. Forms part of the jaw domain. The chain is DNA-directed RNA polymerase subunit Rpo1C from Pyrobaculum aerophilum (strain ATCC 51768 / DSM 7523 / JCM 9630 / CIP 104966 / NBRC 100827 / IM2).